We begin with the raw amino-acid sequence, 217 residues long: Probable transaldolase (217 aa).

Catalysis depends on K85, which acts as the Schiff-base intermediate with substrate.

It belongs to the transaldolase family. Type 3B subfamily.

The protein localises to the cytoplasm. It carries out the reaction D-sedoheptulose 7-phosphate + D-glyceraldehyde 3-phosphate = D-erythrose 4-phosphate + beta-D-fructose 6-phosphate. Its pathway is carbohydrate degradation; pentose phosphate pathway; D-glyceraldehyde 3-phosphate and beta-D-fructose 6-phosphate from D-ribose 5-phosphate and D-xylulose 5-phosphate (non-oxidative stage): step 2/3. Its function is as follows. Transaldolase is important for the balance of metabolites in the pentose-phosphate pathway. The sequence is that of Probable transaldolase from Brachyspira hyodysenteriae (strain ATCC 49526 / WA1).